We begin with the raw amino-acid sequence, 162 residues long: G/U mismatch-specific DNA glycosylase (162 aa).

It belongs to the uracil-DNA glycosylase (UDG) superfamily. TDG/mug family. In terms of assembly, binds DNA as a monomer.

The protein localises to the cytoplasm. The catalysed reaction is Specifically hydrolyzes mismatched double-stranded DNA and polynucleotides, releasing free uracil.. Excises ethenocytosine and uracil, which can arise by alkylation or deamination of cytosine, respectively, from the corresponding mispairs with guanine in ds-DNA. It is capable of hydrolyzing the carbon-nitrogen bond between the sugar-phosphate backbone of the DNA and the mispaired base. The complementary strand guanine functions in substrate recognition. Required for DNA damage lesion repair in stationary-phase cells. This is G/U mismatch-specific DNA glycosylase from Serratia proteamaculans (strain 568).